We begin with the raw amino-acid sequence, 410 residues long: Multifunctional CCA protein (410 aa).

ATP is bound by residues glycine 8 and arginine 11. CTP contacts are provided by glycine 8 and arginine 11. Mg(2+)-binding residues include aspartate 21 and aspartate 23. ATP-binding residues include arginine 91, arginine 137, and arginine 140. Positions 91, 137, and 140 each coordinate CTP. The region spanning 228-329 (TGVHVLSVLQ…LELLQSFDVY (102 aa)) is the HD domain.

Belongs to the tRNA nucleotidyltransferase/poly(A) polymerase family. Bacterial CCA-adding enzyme type 1 subfamily. Monomer. Can also form homodimers and oligomers. The cofactor is Mg(2+). It depends on Ni(2+) as a cofactor.

The catalysed reaction is a tRNA precursor + 2 CTP + ATP = a tRNA with a 3' CCA end + 3 diphosphate. It catalyses the reaction a tRNA with a 3' CCA end + 2 CTP + ATP = a tRNA with a 3' CCACCA end + 3 diphosphate. Functionally, catalyzes the addition and repair of the essential 3'-terminal CCA sequence in tRNAs without using a nucleic acid template. Adds these three nucleotides in the order of C, C, and A to the tRNA nucleotide-73, using CTP and ATP as substrates and producing inorganic pyrophosphate. tRNA 3'-terminal CCA addition is required both for tRNA processing and repair. Also involved in tRNA surveillance by mediating tandem CCA addition to generate a CCACCA at the 3' terminus of unstable tRNAs. While stable tRNAs receive only 3'-terminal CCA, unstable tRNAs are marked with CCACCA and rapidly degraded. The protein is Multifunctional CCA protein of Pseudomonas aeruginosa (strain LESB58).